The sequence spans 471 residues: Maintenance of mitochondrial morphology protein 1 (471 aa).

At 1–21 the chain is on the lumenal side; that stretch reads MSSPQNTSCPPSQHSLSFTQG. The helical transmembrane segment at 22-42 threads the bilayer; the sequence is LLLGQLSVVLLIGAFIKFFIF. The Cytoplasmic portion of the chain corresponds to 43 to 471; it reads GESPSSSSRG…GSLPGAPAVA (429 aa). The 243-residue stretch at 128 to 370 folds into the SMP-LTD domain; the sequence is QPESLDWFNV…EPRVQLVALP (243 aa). 3 disordered regions span residues 271–306, 395–415, and 448–471; these read GTTE…GVRS, EDPA…NRDG, and RGDT…PAVA. The span at 280–295 shows a compositional bias: basic and acidic residues; that stretch reads PHPENQNESKPSRQDP. Over residues 401 to 410 the composition is skewed to polar residues; it reads ATHSGFTPVN.

Belongs to the MMM1 family. Homodimer. Component of the ER-mitochondria encounter structure (ERMES) or MDM complex, composed of MMM1, MDM10, MDM12 and MDM34. An MMM1 homodimer associates with one molecule of MDM12 on each side in a pairwise head-to-tail manner, and the SMP-LTD domains of MMM1 and MDM12 generate a continuous hydrophobic tunnel for phospholipid trafficking.

The protein resides in the endoplasmic reticulum membrane. Its function is as follows. Component of the ERMES/MDM complex, which serves as a molecular tether to connect the endoplasmic reticulum (ER) and mitochondria. Components of this complex are involved in the control of mitochondrial shape and protein biogenesis, and function in nonvesicular lipid trafficking between the ER and mitochondria. The MDM12-MMM1 subcomplex functions in the major beta-barrel assembly pathway that is responsible for biogenesis of all outer membrane beta-barrel proteins, and acts in a late step after the SAM complex. The MDM10-MDM12-MMM1 subcomplex further acts in the TOM40-specific pathway after the action of the MDM12-MMM1 complex. Essential for establishing and maintaining the structure of mitochondria and maintenance of mtDNA nucleoids. The sequence is that of Maintenance of mitochondrial morphology protein 1 from Arthroderma otae (strain ATCC MYA-4605 / CBS 113480) (Microsporum canis).